The sequence spans 303 residues: Methionyl-tRNA formyltransferase (303 aa).

109–112 serves as a coordination point for (6S)-5,6,7,8-tetrahydrofolate; sequence SLLP.

The protein belongs to the Fmt family.

It catalyses the reaction L-methionyl-tRNA(fMet) + (6R)-10-formyltetrahydrofolate = N-formyl-L-methionyl-tRNA(fMet) + (6S)-5,6,7,8-tetrahydrofolate + H(+). Functionally, attaches a formyl group to the free amino group of methionyl-tRNA(fMet). The formyl group appears to play a dual role in the initiator identity of N-formylmethionyl-tRNA by promoting its recognition by IF2 and preventing the misappropriation of this tRNA by the elongation apparatus. This is Methionyl-tRNA formyltransferase from Helicobacter pylori (strain ATCC 700392 / 26695) (Campylobacter pylori).